Here is a 362-residue protein sequence, read N- to C-terminus: Meiotic recombination protein SPO11-1 (362 aa).

Residues 8–142 (SESTNLLQRI…LNVVSVGNGL (135 aa)) form the Topo IIA-type catalytic domain. The active-site O-(5'-phospho-DNA)-tyrosine intermediate is Tyr-103. Mg(2+) is bound by residues Glu-189 and Asp-241.

Belongs to the TOP6A family. As to quaternary structure, heterotetramer of 2 SPO11 (SPO11-1 and/or SPO11-2) and 2 MTOPVIB chains. Interacts with MTOPVIB. May form a heterodimer with SPO11-2. Interacts with PRD1. Does not interact with TOP6B. Mg(2+) serves as cofactor. Expressed in shoots, young seedlings, flowers and reproductive tissues. Not found in roots or rosette leaves.

It is found in the nucleus. It carries out the reaction ATP-dependent breakage, passage and rejoining of double-stranded DNA.. In terms of biological role, component of a topoisomerase 6 complex specifically required for meiotic recombination. Together with MTOPVIB, mediates DNA cleavage that forms the double-strand breaks (DSB) that initiate meiotic recombination. The complex promotes relaxation of negative and positive supercoiled DNA and DNA decatenation through cleavage and ligation cycles. The sequence is that of Meiotic recombination protein SPO11-1 from Arabidopsis thaliana (Mouse-ear cress).